The sequence spans 330 residues: D-lactate dehydrogenase (330 aa).

NAD(+)-binding positions include 156–157 (RI), D176, 206–207 (VP), 233–235 (AAR), and D259. R235 is a catalytic residue. Residue E264 is part of the active site. H296 acts as the Proton donor in catalysis.

The protein belongs to the D-isomer specific 2-hydroxyacid dehydrogenase family.

The catalysed reaction is (R)-lactate + NAD(+) = pyruvate + NADH + H(+). This Staphylococcus aureus protein is D-lactate dehydrogenase (ldhD).